Consider the following 356-residue polypeptide: Protein HEXIM1 (356 aa).

Basic and acidic residues-rich tracts occupy residues 1–11 (MAEPLLTEHQH) and 24–47 (VHEEHTSERPPSAEERVPKEDSRW). Residues 1–162 (MAEPLLTEHQ…RPSKKKRHWK (162 aa)) are disordered. Residues 48 to 58 (QSRASLQSGSR) are compositionally biased toward polar residues. Residues 84–93 (SLEKGEKGQN) show a composition bias toward basic and acidic residues. Phosphoserine occurs at positions 98 and 103. A compositionally biased stretch (basic residues) spans 145–162 (LGKKKHRRRPSKKKRHWK). Residues 147–174 (KKKHRRRPSKKKRHWKPYYKLTWEEKKK) form a basic region; mediates nuclear localization and interaction with 7SK snRNA and NR3C1 region. The tract at residues 199-202 (PYNT) is interaction with P-TEFb. The interval 207–247 (MDDHDQEEPDLKTGLYPKRAAAKSDDTSDEDFVEEAGEEDG) is autoinhibitory acidic region; in absence of 7SK snRNA interacts with the basic region preventing interaction with P-TEFb and modulating subcellular localization. Residues 210–259 (HDQEEPDLKTGLYPKRAAAKSDDTSDEDFVEEAGEEDGGSDGMGGDGSEF) are disordered. Residue S230 is modified to Phosphoserine. T233 is modified (phosphothreonine). A compositionally biased stretch (acidic residues) spans 233–248 (TSDEDFVEEAGEEDGG). S234, S249, and S257 each carry phosphoserine. The stretch at 280-346 (SKQELIKEYL…LTENELHRQQ (67 aa)) forms a coiled coil. A mediates interaction with CCNT1 region spans residues 283-311 (ELIKEYLELEKCLSRKEDENNRLRLESKR). The required for inhibition of ESR1-dependent transcription stretch occupies residues 307-352 (LESKRLGGVDARVRELELELDRLRAENLQLLTENELHRQQERAPLS).

This sequence belongs to the HEXIM family. As to quaternary structure, homooligomer and heterooligomer with HEXIM2; probably dimeric. Core component of the 7SK RNP complex, at least composed of 7SK RNA, LARP7, MEPCE, HEXIM1 (or HEXIM2) and P-TEFb (composed of CDK9 and CCNT1/cyclin-T1). Interacts with the N-CoR complex through NCOR1. Interacts with ESR1 and NR3C1. May interact with NF-kappa-B through RELA. Interacts with CCNT2; mediates formation of a tripartite complex with KPNA2. Part of the HDP-RNP complex composed of at least HEXIM1, PRKDC, XRCC5, XRCC6, paraspeckle proteins (SFPQ, NONO, PSPC1, RBM14, and MATR3) and NEAT1 non-coding RNA. As to expression, widely expressed with higher expression in heart, skeletal muscle and brain (at protein level).

It localises to the nucleus. Its subcellular location is the cytoplasm. In terms of biological role, transcriptional regulator which functions as a general RNA polymerase II transcription inhibitor. Core component of the 7SK RNP complex: in cooperation with 7SK snRNA sequesters P-TEFb in a large inactive 7SK snRNP complex preventing RNA polymerase II phosphorylation and subsequent transcriptional elongation. May also regulate NF-kappa-B, ESR1, NR3C1 and CIITA-dependent transcriptional activity. Plays a role in the regulation of DNA virus-mediated innate immune response by assembling into the HDP-RNP complex, a complex that serves as a platform for IRF3 phosphorylation and subsequent innate immune response activation through the cGAS-STING pathway. This chain is Protein HEXIM1 (Hexim1), found in Mus musculus (Mouse).